A 65-amino-acid polypeptide reads, in one-letter code: MPKMKSHRGACKRFKATASGKIKRERMNGSHNLEKKNRKRTRRLHQSTMLDNATKEKQIKRMILA.

A disordered region spans residues 28–53 (NGSHNLEKKNRKRTRRLHQSTMLDNA). Residues 36-45 (KNRKRTRRLH) are compositionally biased toward basic residues.

The protein belongs to the bacterial ribosomal protein bL35 family.

The polypeptide is Large ribosomal subunit protein bL35 (Chlorobium luteolum (strain DSM 273 / BCRC 81028 / 2530) (Pelodictyon luteolum)).